The following is a 224-amino-acid chain: uncharacterized protein (224 aa).

Residues methionine 1–alanine 17 form the signal peptide.

This is an uncharacterized protein from Caenorhabditis elegans.